Reading from the N-terminus, the 233-residue chain is 7-cyano-7-deazaguanine synthase (233 aa).

7-17 (LSGGLDSLVTS) is an ATP binding site. Zn(2+) contacts are provided by Cys195, Cys206, Cys209, and Cys212.

It belongs to the QueC family. It depends on Zn(2+) as a cofactor.

It carries out the reaction 7-carboxy-7-deazaguanine + NH4(+) + ATP = 7-cyano-7-deazaguanine + ADP + phosphate + H2O + H(+). Its pathway is purine metabolism; 7-cyano-7-deazaguanine biosynthesis. Functionally, catalyzes the ATP-dependent conversion of 7-carboxy-7-deazaguanine (CDG) to 7-cyano-7-deazaguanine (preQ(0)). The chain is 7-cyano-7-deazaguanine synthase from Methanococcus vannielii (strain ATCC 35089 / DSM 1224 / JCM 13029 / OCM 148 / SB).